A 278-amino-acid polypeptide reads, in one-letter code: HTH-type transcriptional activator RhaS (278 aa).

In terms of domain architecture, HTH araC/xylS-type spans 174 to 272; that stretch reads NQLLAWLEDH…DWSPRDIRQG (99 aa). 2 DNA-binding regions (H-T-H motif) span residues 191-212 and 239-262; these read ESIA…KQQT and VTDI…RREF.

Binds DNA as a dimer.

It localises to the cytoplasm. In terms of biological role, activates expression of the rhaBAD and rhaT operons. The chain is HTH-type transcriptional activator RhaS from Citrobacter koseri (strain ATCC BAA-895 / CDC 4225-83 / SGSC4696).